A 373-amino-acid chain; its full sequence is tRNA (guanine(26)-N(2))-dimethyltransferase (373 aa).

The region spanning 2 to 365 is the Trm1 methyltransferase domain; sequence KIISEGETKL…AELSDLVVLI (364 aa). S-adenosyl-L-methionine-binding residues include Arg-35, Arg-66, Asp-86, Asp-113, and Ala-114.

It belongs to the class I-like SAM-binding methyltransferase superfamily. Trm1 family.

The enzyme catalyses guanosine(26) in tRNA + 2 S-adenosyl-L-methionine = N(2)-dimethylguanosine(26) in tRNA + 2 S-adenosyl-L-homocysteine + 2 H(+). Functionally, dimethylates a single guanine residue at position 26 of a number of tRNAs using S-adenosyl-L-methionine as donor of the methyl groups. The chain is tRNA (guanine(26)-N(2))-dimethyltransferase from Methanococcus maripaludis (strain C6 / ATCC BAA-1332).